A 69-amino-acid polypeptide reads, in one-letter code: UPF0291 protein CD630_10710 (69 aa).

It belongs to the UPF0291 family.

It localises to the cytoplasm. This chain is UPF0291 protein CD630_10710, found in Clostridioides difficile (strain 630) (Peptoclostridium difficile).